The chain runs to 87 residues: Small ribosomal subunit protein uS15 (87 aa).

This sequence belongs to the universal ribosomal protein uS15 family. In terms of assembly, part of the 30S ribosomal subunit. Forms a bridge to the 50S subunit in the 70S ribosome, contacting the 23S rRNA.

Functionally, one of the primary rRNA binding proteins, it binds directly to 16S rRNA where it helps nucleate assembly of the platform of the 30S subunit by binding and bridging several RNA helices of the 16S rRNA. In terms of biological role, forms an intersubunit bridge (bridge B4) with the 23S rRNA of the 50S subunit in the ribosome. This chain is Small ribosomal subunit protein uS15, found in Alkaliphilus oremlandii (strain OhILAs) (Clostridium oremlandii (strain OhILAs)).